The chain runs to 382 residues: MEVLWMLLVLLVLHLSSLAMSLSTCKAVDMEEVRKRRIEAIRGQILSKLKLDKTPDVDSEKMTVPSEAIFLYNSTLEVIREKATREEEHVGHDQNIQDYYAKQVYRFESITELEDHEFKFKFNASHVRENVGMNSLLHHAELRMYKKQTDKNMDQRMELFWKYQENGTTHSRYLESKYITPVTDDEWMSFDVTKTVNEWLKRAEENEQFGLQPACKCPTPQAKDIDIEGFPALRGDLASLSSKENTKPYLMITSMPAERIDTVTSSRKKRGVGQEYCFGNNGPNCCVKPLYINFRKDLGWKWIHEPKGYEANYCLGNCPYIWSMDTQYSKVLSLYNQNNPGASISPCCVPDVLEPLPIIYYVGRTAKVEQLSNMVVRSCNCS.

Positions 1-21 are cleaved as a signal peptide; sequence MEVLWMLLVLLVLHLSSLAMS. The tract at residues 22 to 65 is straightjacket domain; that stretch reads LSTCKAVDMEEVRKRRIEAIRGQILSKLKLDKTPDVDSEKMTVP. The arm domain stretch occupies residues 66 to 263; it reads SEAIFLYNST…SMPAERIDTV (198 aa). Residues asparagine 73, asparagine 123, and asparagine 166 are each glycosylated (N-linked (GlcNAc...) asparagine). The segment at 218-242 is bowtie tail; it reads PTPQAKDIDIEGFPALRGDLASLSS. A Cell attachment site motif is present at residues 234–236; it reads RGD. Disulfide bonds link cysteine 277/cysteine 286, cysteine 285/cysteine 348, cysteine 314/cysteine 379, and cysteine 318/cysteine 381.

This sequence belongs to the TGF-beta family. As to quaternary structure, latency-associated peptide: Homodimer; disulfide-linked. Latency-associated peptide: Interacts with Transforming growth factor beta-1 (TGF-beta-1) chain; interaction is non-covalent and maintains (TGF-beta-1) in a latent state; each Latency-associated peptide (LAP) monomer interacts with TGF-beta-1 in the other monomer. Transforming growth factor beta-1: Homodimer; disulfide-linked. Transforming growth factor beta-1: Interacts with TGF-beta receptors (tgfbr1 and tgfbr2), leading to signal transduction. Transforming growth factor beta-1 proprotein: The precursor proprotein is cleaved in the Golgi apparatus to form Transforming growth factor beta-1 (TGF-beta-1) and Latency-associated peptide (LAP) chains, which remain non-covalently linked, rendering TGF-beta-1 inactive.

The protein localises to the secreted. The protein resides in the extracellular space. Its subcellular location is the extracellular matrix. Its function is as follows. Transforming growth factor beta-1 proprotein: Precursor of the Latency-associated peptide (LAP) and Transforming growth factor beta-1 (TGF-beta-1) chains, which constitute the regulatory and active subunit of TGF-beta-1, respectively. In terms of biological role, required to maintain the Transforming growth factor beta-1 (TGF-beta-1) chain in a latent state during storage in extracellular matrix. Associates non-covalently with TGF-beta-1 and regulates its activation via interaction with 'milieu molecules', such as LTBP1, LRRC32/GARP and LRRC33/NRROS, that control activation of TGF-beta-1. Interaction with integrins (ITGAV:ITGB6 or ITGAV:ITGB8) results in distortion of the Latency-associated peptide chain and subsequent release of the active TGF-beta-1. Functionally, transforming growth factor beta-1: Multifunctional protein that regulates the growth and differentiation of various cell types and is involved in various processes, such as normal development, immune function, microglia function and responses to neurodegeneration. Activation into mature form follows different steps: following cleavage of the proprotein in the Golgi apparatus, Latency-associated peptide (LAP) and Transforming growth factor beta-1 (TGF-beta-1) chains remain non-covalently linked rendering TGF-beta-1 inactive during storage in extracellular matrix. At the same time, LAP chain interacts with 'milieu molecules', such as ltbp1, lrrc32/garp and lrrc33/nrros that control activation of TGF-beta-1 and maintain it in a latent state during storage in extracellular milieus. TGF-beta-1 is released from LAP by integrins (ITGAV:ITGB6 or ITGAV:ITGB8): integrin-binding to LAP stabilizes an alternative conformation of the LAP bowtie tail and results in distortion of the LAP chain and subsequent release of the active TGF-beta-1. Once activated following release of LAP, TGF-beta-1 acts by binding to TGF-beta receptors (tgfbr1 and tgfbr2), which transduce signal. While expressed by many cells types, TGF-beta-1 only has a very localized range of action within cell environment thanks to fine regulation of its activation by Latency-associated peptide chain (LAP) and 'milieu molecules'. Plays an important role in bone remodeling: acts as a potent stimulator of osteoblastic bone formation. Can promote either T-helper 17 cells (Th17) or regulatory T-cells (Treg) lineage differentiation in a concentration-dependent manner. Can induce epithelial-to-mesenchymal transition (EMT) and cell migration in various cell types. The polypeptide is Transforming growth factor beta-1 proprotein (tgfb1) (Xenopus laevis (African clawed frog)).